Consider the following 298-residue polypeptide: Release factor glutamine methyltransferase (298 aa).

S-adenosyl-L-methionine is bound by residues 131–135 (GTGTG), aspartate 162, tryptophan 189, and asparagine 205. Position 205–208 (205–208 (NPPY)) interacts with substrate.

This sequence belongs to the protein N5-glutamine methyltransferase family. PrmC subfamily.

It carries out the reaction L-glutaminyl-[peptide chain release factor] + S-adenosyl-L-methionine = N(5)-methyl-L-glutaminyl-[peptide chain release factor] + S-adenosyl-L-homocysteine + H(+). Its function is as follows. Methylates the class 1 translation termination release factors RF1/PrfA and RF2/PrfB on the glutamine residue of the universally conserved GGQ motif. The sequence is that of Release factor glutamine methyltransferase from Pasteurella multocida (strain Pm70).